The chain runs to 206 residues: Large ribosomal subunit protein eL8 (206 aa).

It belongs to the eukaryotic ribosomal protein eL8 family. In terms of assembly, component of the large ribosomal subunit.

It is found in the cytoplasm. The chain is Large ribosomal subunit protein eL8 (RPL7A) from Encephalitozoon cuniculi (strain GB-M1) (Microsporidian parasite).